Consider the following 509-residue polypeptide: Dihydrolipoyl dehydrogenase, mitochondrial (509 aa).

The N-terminal 35 residues, 1 to 35 (MQSWSRVYCSLAKKGHFNRLSHGLQGASSVPLRTY), are a transit peptide targeting the mitochondrion. Lys-66 is subject to N6-acetyllysine; alternate. Lys-66 bears the N6-succinyllysine; alternate mark. Residues 71 to 80 (EKNETLGGTC) and Lys-89 contribute to the FAD site. Cysteines 80 and 85 form a disulfide. N6-acetyllysine; alternate is present on residues Lys-104, Lys-122, Lys-132, and Lys-143. Lys-104, Lys-122, Lys-132, and Lys-143 each carry N6-succinyllysine; alternate. FAD is bound at residue Gly-154. N6-succinyllysine is present on Lys-159. Position 183 to 185 (183 to 185 (TGS)) interacts with FAD. NAD(+) contacts are provided by residues 220 to 227 (GAGVIGVE) and Glu-243. An N6-succinyllysine mark is found at Lys-273 and Lys-277. Residue Val-278 coordinates NAD(+). Phosphoserine occurs at positions 285 and 297. Gly-314 lines the NAD(+) pocket. The residue at position 346 (Lys-346) is an N6-acetyllysine. FAD contacts are provided by residues Asp-355 and 361 to 364 (MLAH). At Lys-410 the chain carries N6-acetyllysine; alternate. Lys-410 carries the N6-succinyllysine; alternate modification. N6-acetyllysine occurs at positions 417 and 420. Position 430 is an N6-succinyllysine (Lys-430). His-487 functions as the Proton acceptor in the catalytic mechanism. Ser-502 is modified (phosphoserine). Residue Lys-505 is modified to N6-acetyllysine; alternate. Residue Lys-505 is modified to N6-succinyllysine; alternate.

The protein belongs to the class-I pyridine nucleotide-disulfide oxidoreductase family. Homodimer. Part of the multimeric pyruvate dehydrogenase complex that contains multiple copies of pyruvate dehydrogenase (subunits PDHA (PDHA1 or PDHA2) and PDHB, E1), dihydrolipoamide acetyltransferase (DLAT, E2) and lipoamide dehydrogenase (DLD, E3). These subunits are bound to an inner core composed of about 48 DLAT and 12 PDHX molecules (by non covalent bonds). The 2-oxoglutarate dehydrogenase complex is composed of OGDH (2-oxoglutarate dehydrogenase; E1), DLST (dihydrolipoamide succinyltransferase; E2), DLD (dihydrolipoamide dehydrogenase; E3) and the assembly factor KGD4. It contains multiple copies of the three enzymatic components (E1, E2 and E3). In the nucleus, the 2-oxoglutarate dehydrogenase complex associates with KAT2A. Interacts with PDHX. Requires FAD as cofactor. Post-translationally, tyrosine phosphorylated.

It localises to the mitochondrion matrix. The protein localises to the nucleus. The protein resides in the cell projection. It is found in the cilium. Its subcellular location is the flagellum. It localises to the cytoplasmic vesicle. The protein localises to the secretory vesicle. The protein resides in the acrosome. It carries out the reaction N(6)-[(R)-dihydrolipoyl]-L-lysyl-[protein] + NAD(+) = N(6)-[(R)-lipoyl]-L-lysyl-[protein] + NADH + H(+). Functionally, lipoamide dehydrogenase is a component of the glycine cleavage system as well as an E3 component of three alpha-ketoacid dehydrogenase complexes (pyruvate-, alpha-ketoglutarate-, and branched-chain amino acid-dehydrogenase complex). The 2-oxoglutarate dehydrogenase complex is mainly active in the mitochondrion. A fraction of the 2-oxoglutarate dehydrogenase complex also localizes in the nucleus and is required for lysine succinylation of histones: associates with KAT2A on chromatin and provides succinyl-CoA to histone succinyltransferase KAT2A. In monomeric form may have additional moonlighting function as serine protease. Involved in the hyperactivation of spermatazoa during capacitation and in the spermatazoal acrosome reaction. The protein is Dihydrolipoyl dehydrogenase, mitochondrial (Dld) of Rattus norvegicus (Rat).